Here is a 457-residue protein sequence, read N- to C-terminus: Multidrug resistance protein MdtK (457 aa).

12 consecutive transmembrane segments (helical) span residues 11 to 31 (LLAL…MGVV), 53 to 73 (IWLP…PVIA), 93 to 113 (VLAG…GYII), 127 to 147 (AVNY…FQVM), 160 to 180 (GMAM…IFIY), 188 to 208 (LGGV…FFCM), 243 to 263 (MPVA…ALLV), 276 to 296 (IALN…AAVT), 316 to 336 (RTGI…TVVF), 357 to 377 (LMLL…GSGV), 387 to 407 (IFFI…YILG), and 418 to 438 (PAGF…MMMW).

The protein belongs to the multi antimicrobial extrusion (MATE) (TC 2.A.66.1) family. MdtK subfamily.

The protein resides in the cell inner membrane. In terms of biological role, multidrug efflux pump that functions probably as a Na(+)/drug antiporter. This Cronobacter sakazakii (strain ATCC BAA-894) (Enterobacter sakazakii) protein is Multidrug resistance protein MdtK.